We begin with the raw amino-acid sequence, 249 residues long: Probable septum site-determining protein MinC (249 aa).

The tract at residues 117 to 138 (AVRPPQPPPPPHARAEPAAPVA) is disordered.

The protein belongs to the MinC family. Interacts with MinD and FtsZ.

Functionally, cell division inhibitor that blocks the formation of polar Z ring septums. Rapidly oscillates between the poles of the cell to destabilize FtsZ filaments that have formed before they mature into polar Z rings. Prevents FtsZ polymerization. The protein is Probable septum site-determining protein MinC of Xanthomonas campestris pv. campestris (strain 8004).